We begin with the raw amino-acid sequence, 51 residues long: Large ribosomal subunit protein eL39 (51 aa).

This sequence belongs to the eukaryotic ribosomal protein eL39 family.

The chain is Large ribosomal subunit protein eL39 from Saccharolobus islandicus (strain Y.N.15.51 / Yellowstone #2) (Sulfolobus islandicus).